We begin with the raw amino-acid sequence, 45 residues long: Large ribosomal subunit protein bL36 (45 aa).

The segment at 26 to 45 (VINKKDPNRKQRQKGPARKK) is disordered. Over residues 35–45 (KQRQKGPARKK) the composition is skewed to basic residues.

It belongs to the bacterial ribosomal protein bL36 family.

This chain is Large ribosomal subunit protein bL36, found in Protochlamydia amoebophila (strain UWE25).